The primary structure comprises 313 residues: Aspartate carbamoyltransferase catalytic subunit (313 aa).

Residues R51 and T52 each coordinate carbamoyl phosphate. K80 is a binding site for L-aspartate. Carbamoyl phosphate contacts are provided by R101, H129, and Q132. L-aspartate is bound by residues R162 and R224. Carbamoyl phosphate contacts are provided by L263 and P264.

Belongs to the aspartate/ornithine carbamoyltransferase superfamily. ATCase family. As to quaternary structure, heterododecamer (2C3:3R2) of six catalytic PyrB chains organized as two trimers (C3), and six regulatory PyrI chains organized as three dimers (R2).

It catalyses the reaction carbamoyl phosphate + L-aspartate = N-carbamoyl-L-aspartate + phosphate + H(+). Its pathway is pyrimidine metabolism; UMP biosynthesis via de novo pathway; (S)-dihydroorotate from bicarbonate: step 2/3. Its function is as follows. Catalyzes the condensation of carbamoyl phosphate and aspartate to form carbamoyl aspartate and inorganic phosphate, the committed step in the de novo pyrimidine nucleotide biosynthesis pathway. The sequence is that of Aspartate carbamoyltransferase catalytic subunit from Bacteroides thetaiotaomicron (strain ATCC 29148 / DSM 2079 / JCM 5827 / CCUG 10774 / NCTC 10582 / VPI-5482 / E50).